The following is a 192-amino-acid chain: Small ribosomal subunit protein uS5 (192 aa).

The 64-residue stretch at 20–83 (FVDRLVHINR…EAAKRGLIRV (64 aa)) folds into the S5 DRBM domain. Positions 165–192 (ARRGLKVSALQARRRDAEPGSADSADAA) are disordered.

The protein belongs to the universal ribosomal protein uS5 family. Part of the 30S ribosomal subunit. Contacts proteins S4 and S8.

With S4 and S12 plays an important role in translational accuracy. In terms of biological role, located at the back of the 30S subunit body where it stabilizes the conformation of the head with respect to the body. The polypeptide is Small ribosomal subunit protein uS5 (Methylobacterium sp. (strain 4-46)).